The following is a 263-amino-acid chain: Endonuclease 8 (263 aa).

The active-site Schiff-base intermediate with DNA is the proline 2. The active-site Proton donor is the glutamate 3. The active-site Proton donor; for beta-elimination activity is the lysine 53. The DNA site is built by glutamine 70, arginine 125, and asparagine 169. The segment at 229-263 (KVFHRDGELCERCGGIIEKTTLSSRPFYWCPGCQH) adopts an FPG-type zinc-finger fold. Arginine 253 serves as the catalytic Proton donor; for delta-elimination activity.

It belongs to the FPG family. Requires Zn(2+) as cofactor.

It carries out the reaction 2'-deoxyribonucleotide-(2'-deoxyribose 5'-phosphate)-2'-deoxyribonucleotide-DNA = a 3'-end 2'-deoxyribonucleotide-(2,3-dehydro-2,3-deoxyribose 5'-phosphate)-DNA + a 5'-end 5'-phospho-2'-deoxyribonucleoside-DNA + H(+). Its function is as follows. Involved in base excision repair of DNA damaged by oxidation or by mutagenic agents. Acts as a DNA glycosylase that recognizes and removes damaged bases. Has a preference for oxidized pyrimidines, such as thymine glycol, 5,6-dihydrouracil and 5,6-dihydrothymine. Has AP (apurinic/apyrimidinic) lyase activity and introduces nicks in the DNA strand. Cleaves the DNA backbone by beta-delta elimination to generate a single-strand break at the site of the removed base with both 3'- and 5'-phosphates. This chain is Endonuclease 8, found in Shigella boydii serotype 4 (strain Sb227).